A 208-amino-acid chain; its full sequence is Small ribosomal subunit protein uS4 (208 aa).

In terms of domain architecture, S4 RNA-binding spans 98–164; the sequence is TRLDNVVYRL…PKVKSIREIA (67 aa).

This sequence belongs to the universal ribosomal protein uS4 family. As to quaternary structure, part of the 30S ribosomal subunit. Contacts protein S5. The interaction surface between S4 and S5 is involved in control of translational fidelity.

Its function is as follows. One of the primary rRNA binding proteins, it binds directly to 16S rRNA where it nucleates assembly of the body of the 30S subunit. With S5 and S12 plays an important role in translational accuracy. The sequence is that of Small ribosomal subunit protein uS4 from Ruminiclostridium cellulolyticum (strain ATCC 35319 / DSM 5812 / JCM 6584 / H10) (Clostridium cellulolyticum).